A 291-amino-acid chain; its full sequence is UDP-N-acetylenolpyruvoylglucosamine reductase (291 aa).

Positions 22 to 187 (RIGGPARYFK…ASATFQLTKD (166 aa)) constitute an FAD-binding PCMH-type domain. R166 is an active-site residue. C214 acts as the Proton donor in catalysis. The active site involves E283.

Belongs to the MurB family. Requires FAD as cofactor.

Its subcellular location is the cytoplasm. The catalysed reaction is UDP-N-acetyl-alpha-D-muramate + NADP(+) = UDP-N-acetyl-3-O-(1-carboxyvinyl)-alpha-D-glucosamine + NADPH + H(+). It participates in cell wall biogenesis; peptidoglycan biosynthesis. Its function is as follows. Cell wall formation. The chain is UDP-N-acetylenolpyruvoylglucosamine reductase from Chlamydia trachomatis serovar A (strain ATCC VR-571B / DSM 19440 / HAR-13).